The chain runs to 592 residues: Methionine--tRNA ligase (592 aa).

Residues proline 12 to histidine 22 carry the 'HIGH' region motif. Zn(2+) is bound by residues cysteine 144, cysteine 147, cysteine 157, and cysteine 160. Positions lysine 342–serine 346 match the 'KMSKS' region motif. Threonine 345 is a binding site for ATP.

Belongs to the class-I aminoacyl-tRNA synthetase family. MetG type 1 subfamily. In terms of assembly, monomer. Zn(2+) is required as a cofactor.

The protein resides in the cytoplasm. It carries out the reaction tRNA(Met) + L-methionine + ATP = L-methionyl-tRNA(Met) + AMP + diphosphate. Is required not only for elongation of protein synthesis but also for the initiation of all mRNA translation through initiator tRNA(fMet) aminoacylation. The polypeptide is Methionine--tRNA ligase (Roseiflexus castenholzii (strain DSM 13941 / HLO8)).